The following is a 529-amino-acid chain: Glycerol kinase 5 (529 aa).

Thr-22 and Thr-23 together coordinate ATP. Arg-92, Asp-269, and Gln-270 together coordinate glycerol. Thr-291, Gly-334, and Gly-434 together coordinate ATP.

It belongs to the FGGY kinase family.

It localises to the cytoplasm. The catalysed reaction is glycerol + ATP = sn-glycerol 3-phosphate + ADP + H(+). It functions in the pathway polyol metabolism; glycerol degradation via glycerol kinase pathway; sn-glycerol 3-phosphate from glycerol: step 1/1. Skin-specific kinase that plays a key role in glycerol metabolism, catalyzing its phosphorylation to produce sn-glycerol 3-phosphate. Involved in skin-specific regulation of sterol regulatory element-binding protein (SREBP) processing and lipid biosynthesis. In Danio rerio (Zebrafish), this protein is Glycerol kinase 5 (gk5).